The chain runs to 113 residues: Regulator of rDNA transcription protein 7 (113 aa).

The next 2 helical transmembrane spans lie at 13 to 35 (FLPI…LFYN) and 70 to 92 (FLLG…LLFL).

The protein localises to the membrane. Its function is as follows. Identified in a screen for mutants with decreased levels of rDNA transcription. The chain is Regulator of rDNA transcription protein 7 (RRT7) from Saccharomyces cerevisiae (strain ATCC 204508 / S288c) (Baker's yeast).